A 429-amino-acid polypeptide reads, in one-letter code: Enolase (429 aa).

Gln-164 is a binding site for (2R)-2-phosphoglycerate. Glu-206 serves as the catalytic Proton donor. Mg(2+)-binding residues include Asp-243, Glu-286, and Asp-313. Residues Lys-338, Arg-367, Ser-368, and Lys-389 each coordinate (2R)-2-phosphoglycerate. Catalysis depends on Lys-338, which acts as the Proton acceptor.

The protein belongs to the enolase family. Homooctamer. Forms a ring-shaped particle. Mg(2+) is required as a cofactor.

It localises to the cytoplasm. The protein localises to the secreted. Its subcellular location is the cell surface. It catalyses the reaction (2R)-2-phosphoglycerate = phosphoenolpyruvate + H2O. It participates in carbohydrate degradation; glycolysis; pyruvate from D-glyceraldehyde 3-phosphate: step 4/5. Inhibited by fluoride and phosphate. In terms of biological role, catalyzes the reversible conversion of 2-phosphoglycerate (2-PG) into phosphoenolpyruvate (PEP). It is essential for the degradation of carbohydrates via glycolysis. This chain is Enolase, found in Thermotoga maritima (strain ATCC 43589 / DSM 3109 / JCM 10099 / NBRC 100826 / MSB8).